The chain runs to 337 residues: UbiA prenyltransferase domain-containing protein 1 (337 aa).

The residue at position 2 (Ala-2) is an N-acetylalanine. 8 helical membrane passes run 82 to 102 (LLVG…LVNT), 133 to 153 (FGVF…CLSP), 159 to 179 (LALI…GIGF), 187 to 207 (LVIL…VQVG), 208 to 228 (SLAV…EAVL), 244 to 266 (IVTL…LLFL), 276 to 296 (THCS…FSLE), and 314 to 334 (LNLL…AGSL).

The protein belongs to the UbiA prenyltransferase family. As to quaternary structure, interacts with HMGCR and SOAT1.

The protein resides in the endoplasmic reticulum membrane. The protein localises to the golgi apparatus membrane. Its subcellular location is the mitochondrion membrane. It catalyses the reaction menadiol + (2E,6E,10E)-geranylgeranyl diphosphate = menaquinol-4 + diphosphate. The enzyme catalyses all-trans-decaprenyl diphosphate + 4-hydroxybenzoate = 4-hydroxy-3-(all-trans-decaprenyl)benzoate + diphosphate. The protein operates within quinol/quinone metabolism; menaquinone biosynthesis. Its pathway is cofactor biosynthesis; ubiquinone biosynthesis. Prenyltransferase that mediates the formation of menaquinone-4 (MK-4) and coenzyme Q10. MK-4 is a vitamin K2 isoform required for endothelial cell development. Mediates the conversion of phylloquinone (PK) into MK-4, probably by cleaving the side chain of phylloquinone (PK) to release 2-methyl-1,4-naphthoquinone (menadione; K3) and then prenylating it with geranylgeranyl pyrophosphate (GGPP) to form MK-4. Also plays a role in cardiovascular development independently of MK-4 biosynthesis, by acting as a coenzyme Q10 biosynthetic enzyme: coenzyme Q10, also named ubiquinone, plays an important antioxidant role in the cardiovascular system. Mediates biosynthesis of coenzyme Q10 in the Golgi membrane, leading to protect cardiovascular tissues from NOS3/eNOS-dependent oxidative stress. The chain is UbiA prenyltransferase domain-containing protein 1 (UBIAD1) from Ailuropoda melanoleuca (Giant panda).